Reading from the N-terminus, the 318-residue chain is GTP cyclohydrolase MptA (318 aa).

This sequence belongs to the GTP cyclohydrolase IV family. Homodimer. The cofactor is Fe(2+).

The catalysed reaction is GTP + H2O = 7,8-dihydroneopterin 2',3'-cyclic phosphate + formate + diphosphate + H(+). It participates in cofactor biosynthesis; 5,6,7,8-tetrahydromethanopterin biosynthesis. In terms of biological role, converts GTP to 7,8-dihydro-D-neopterin 2',3'-cyclic phosphate, the first intermediate in the biosynthesis of coenzyme methanopterin. This chain is GTP cyclohydrolase MptA, found in Methanosarcina mazei (strain ATCC BAA-159 / DSM 3647 / Goe1 / Go1 / JCM 11833 / OCM 88) (Methanosarcina frisia).